Reading from the N-terminus, the 594-residue chain is Glutamate decarboxylase 1 (594 aa).

Over residues 1–13 (MASSTPSSSATSS) the composition is skewed to low complexity. A disordered region spans residues 1-23 (MASSTPSSSATSSNAGADPNTTN). Phosphoserine is present on S78. 190-192 (QLS) lines the 4-aminobutanoate pocket. K405 is modified (N6-(pyridoxal phosphate)lysine). 4-aminobutanoate is bound at residue R567.

It belongs to the group II decarboxylase family. Homodimer. Pyridoxal 5'-phosphate is required as a cofactor.

The catalysed reaction is L-glutamate + H(+) = 4-aminobutanoate + CO2. Its function is as follows. Catalyzes the synthesis of the inhibitory neurotransmitter gamma-aminobutyric acid (GABA) with pyridoxal 5'-phosphate as cofactor. The chain is Glutamate decarboxylase 1 (GAD1) from Felis catus (Cat).